Reading from the N-terminus, the 419-residue chain is Serine hydroxymethyltransferase (419 aa).

(6S)-5,6,7,8-tetrahydrofolate-binding positions include L121 and 125–127 (GHL). At K230 the chain carries N6-(pyridoxal phosphate)lysine. 355 to 357 (SPF) contributes to the (6S)-5,6,7,8-tetrahydrofolate binding site.

This sequence belongs to the SHMT family. Homodimer. Pyridoxal 5'-phosphate serves as cofactor.

Its subcellular location is the cytoplasm. The enzyme catalyses (6R)-5,10-methylene-5,6,7,8-tetrahydrofolate + glycine + H2O = (6S)-5,6,7,8-tetrahydrofolate + L-serine. The protein operates within one-carbon metabolism; tetrahydrofolate interconversion. Its pathway is amino-acid biosynthesis; glycine biosynthesis; glycine from L-serine: step 1/1. Functionally, catalyzes the reversible interconversion of serine and glycine with tetrahydrofolate (THF) serving as the one-carbon carrier. This reaction serves as the major source of one-carbon groups required for the biosynthesis of purines, thymidylate, methionine, and other important biomolecules. Also exhibits THF-independent aldolase activity toward beta-hydroxyamino acids, producing glycine and aldehydes, via a retro-aldol mechanism. The polypeptide is Serine hydroxymethyltransferase (Streptococcus equi subsp. zooepidemicus (strain MGCS10565)).